Consider the following 135-residue polypeptide: Small ribosomal subunit protein uS12 (135 aa).

The disordered stretch occupies residues 1-24; sequence MPTINQLVRKGRHSKTTKSKSPAL. Residues 9–18 are compositionally biased toward basic residues; sequence RKGRHSKTTK. Asp102 carries the post-translational modification 3-methylthioaspartic acid.

It belongs to the universal ribosomal protein uS12 family. In terms of assembly, part of the 30S ribosomal subunit. Contacts proteins S8 and S17. May interact with IF1 in the 30S initiation complex.

Its function is as follows. With S4 and S5 plays an important role in translational accuracy. In terms of biological role, interacts with and stabilizes bases of the 16S rRNA that are involved in tRNA selection in the A site and with the mRNA backbone. Located at the interface of the 30S and 50S subunits, it traverses the body of the 30S subunit contacting proteins on the other side and probably holding the rRNA structure together. The combined cluster of proteins S8, S12 and S17 appears to hold together the shoulder and platform of the 30S subunit. This is Small ribosomal subunit protein uS12 from Lactobacillus delbrueckii subsp. bulgaricus (strain ATCC 11842 / DSM 20081 / BCRC 10696 / JCM 1002 / NBRC 13953 / NCIMB 11778 / NCTC 12712 / WDCM 00102 / Lb 14).